We begin with the raw amino-acid sequence, 93 residues long: Co-chaperonin GroES 2 (93 aa).

A disordered region spans residues 1 to 20; sequence MQPLGERIVVQREESETTTA.

The protein belongs to the GroES chaperonin family. Heptamer of 7 subunits arranged in a ring. Interacts with the chaperonin GroEL.

It is found in the cytoplasm. In terms of biological role, together with the chaperonin GroEL, plays an essential role in assisting protein folding. The GroEL-GroES system forms a nano-cage that allows encapsulation of the non-native substrate proteins and provides a physical environment optimized to promote and accelerate protein folding. GroES binds to the apical surface of the GroEL ring, thereby capping the opening of the GroEL channel. The sequence is that of Co-chaperonin GroES 2 from Rhodopirellula baltica (strain DSM 10527 / NCIMB 13988 / SH1).